A 131-amino-acid polypeptide reads, in one-letter code: 23S rRNA-specific endonuclease VapC20 (131 aa).

The region spanning 2-125 (IFVDTSFWAA…FDGDFSAAGF (124 aa)) is the PINc domain. Mg(2+) contacts are provided by aspartate 5 and aspartate 98.

It belongs to the PINc/VapC protein family. The cofactor is Mg(2+).

In terms of biological role, toxic component of a type II toxin-antitoxin (TA) system. An endoribonuclease that cleaves 23S rRNA in the sarcin-ricin loop (SRL). The SRL sequence is highly conserved and is implicated in GTP hydrolysis by EF-Tu and EF-G. Acts on purified ribosomes but not on isolated RNA. Its toxic effect is neutralized by coexpression with cognate antitoxin VapB20. The chain is 23S rRNA-specific endonuclease VapC20 (vapC20) from Mycobacterium tuberculosis (strain CDC 1551 / Oshkosh).